Here is a 146-residue protein sequence, read N- to C-terminus: uncharacterized protein (146 aa).

The helical transmembrane segment at 6-26 (IPIFVISLSNISHIILAIFFF) threads the bilayer.

The protein resides in the membrane. This is an uncharacterized protein from Caenorhabditis elegans.